Here is a 450-residue protein sequence, read N- to C-terminus: Histidinol dehydrogenase (450 aa).

3 residues coordinate NAD(+): Tyr135, Gln197, and Asn225. Residues Thr248, Gln270, and His273 each contribute to the substrate site. The Zn(2+) site is built by Gln270 and His273. Catalysis depends on proton acceptor residues Glu339 and His340. Substrate-binding residues include His340, Asp373, Glu427, and His432. Residue Asp373 participates in Zn(2+) binding. His432 provides a ligand contact to Zn(2+).

It belongs to the histidinol dehydrogenase family. Zn(2+) serves as cofactor.

The enzyme catalyses L-histidinol + 2 NAD(+) + H2O = L-histidine + 2 NADH + 3 H(+). The protein operates within amino-acid biosynthesis; L-histidine biosynthesis; L-histidine from 5-phospho-alpha-D-ribose 1-diphosphate: step 9/9. Its function is as follows. Catalyzes the sequential NAD-dependent oxidations of L-histidinol to L-histidinaldehyde and then to L-histidine. The chain is Histidinol dehydrogenase from Corynebacterium jeikeium (strain K411).